The chain runs to 128 residues: Calcitonin gene-related peptide 1 (128 aa).

Residues 1 to 25 (MGFLKFSPFLVVSILLLYQACSLQA) form the signal peptide. Positions 26 to 80 (VPLRSILESSPGMATLSEEEVRLLAALVQDYMQMKARELEQEEEQEAEGSSVTAQ) are excised as a propeptide. Cysteines 84 and 89 form a disulfide. Phe-119 is subject to Phenylalanine amide. A propeptide spanning residues 125–128 (DLQA) is cleaved from the precursor.

Belongs to the calcitonin family. In terms of tissue distribution, detected in nerve cells of cerebrum, hippocampus and pons/midbrain in newborns, and only in nerve cells of pons/midbrain in adult.

It localises to the secreted. Functionally, CGRP1/CALCA is a peptide hormone that induces vasodilation mediated by the CALCRL-RAMP1 receptor complex. Dilates a variety of vessels including the coronary, cerebral and systemic vasculature. Its abundance in the CNS also points toward a neurotransmitter or neuromodulator role. It also elevates platelet cAMP. CGRP1 can also bind and activate CALCR-RAMP1 (AMYR1) receptor complex. The polypeptide is Calcitonin gene-related peptide 1 (Mus musculus (Mouse)).